The following is a 452-amino-acid chain: Tol-Pal system protein TolB (452 aa).

A signal peptide spans 1–31 (MCGVRRGMGVLLLFCAVALCAMPFVVRSVWG).

The protein belongs to the TolB family. The Tol-Pal system is composed of five core proteins: the inner membrane proteins TolA, TolQ and TolR, the periplasmic protein TolB and the outer membrane protein Pal. They form a network linking the inner and outer membranes and the peptidoglycan layer.

It is found in the periplasm. Part of the Tol-Pal system, which plays a role in outer membrane invagination during cell division and is important for maintaining outer membrane integrity. The sequence is that of Tol-Pal system protein TolB from Syntrophus aciditrophicus (strain SB).